Here is a 116-residue protein sequence, read N- to C-terminus: MAGRSGDSDQELLKAVRYIKILYQSNPYPKPEGTRQARRNRRRRWRARQRQIREISDRILSSCLGRPAEPVPLQLPPLERLHINCSEDCGQGAEEGVGSSQISGESHTVLGSGTKE.

Phosphoserine; by host CK2 is present on residues S5 and S8. The homomultimerization stretch occupies residues 18-26 (YIKILYQSN). A disordered region spans residues 26 to 48 (NPYPKPEGTRQARRNRRRRWRAR). The short motif at 34 to 50 (TRQARRNRRRRWRARQR) is the Nuclear localization signal and RNA-binding (RRE) element. A compositionally biased stretch (basic residues) spans 36–48 (QARRNRRRRWRAR). The short motif at 73-84 (LQLPPLERLHIN) is the Nuclear export signal and binding to XPO1 element. Residues 89 to 116 (CGQGAEEGVGSSQISGESHTVLGSGTKE) form a disordered region. The segment covering 98 to 116 (GSSQISGESHTVLGSGTKE) has biased composition (polar residues). S99 carries the post-translational modification Phosphoserine; by host.

Belongs to the HIV-1 REV protein family. Homomultimer; when bound to the RRE. Multimeric assembly is essential for activity and may involve XPO1. Binds to human KPNB1, XPO1, TNPO1, RANBP5 and IPO7. Interacts with the viral Integrase. Interacts with human KHDRBS1. Interacts with human NAP1; this interaction decreases Rev multimerization and stimulates its activity. Interacts with human DEAD-box helicases DDX3 and DDX24; these interactions may serve for viral RNA export to the cytoplasm and packaging, respectively. Interacts with human PSIP1; this interaction may inhibit HIV-1 DNA integration by promoting dissociation of the Integrase-LEDGF/p75 complex. In terms of processing, asymmetrically arginine dimethylated at one site by host PRMT6. Methylation impairs the RNA-binding activity and export of viral RNA from the nucleus to the cytoplasm. Phosphorylated by protein kinase CK2. Presence of, and maybe binding to the N-terminus of the regulatory beta subunit of CK2 is necessary for CK2-mediated Rev's phosphorylation.

It localises to the host nucleus. The protein localises to the host nucleolus. The protein resides in the host cytoplasm. In terms of biological role, escorts unspliced or incompletely spliced viral pre-mRNAs (late transcripts) out of the nucleus of infected cells. These pre-mRNAs carry a recognition sequence called Rev responsive element (RRE) located in the env gene, that is not present in fully spliced viral mRNAs (early transcripts). This function is essential since most viral proteins are translated from unspliced or partially spliced pre-mRNAs which cannot exit the nucleus by the pathway used by fully processed cellular mRNAs. Rev itself is translated from a fully spliced mRNA that readily exits the nucleus. Rev's nuclear localization signal (NLS) binds directly to KPNB1/Importin beta-1 without previous binding to KPNA1/Importin alpha-1. KPNB1 binds to the GDP bound form of RAN (Ran-GDP) and targets Rev to the nucleus. In the nucleus, the conversion from Ran-GDP to Ran-GTP dissociates Rev from KPNB1 and allows Rev's binding to the RRE in viral pre-mRNAs. Rev multimerization on the RRE via cooperative assembly exposes its nuclear export signal (NES) to the surface. Rev can then form a complex with XPO1/CRM1 and Ran-GTP, leading to nuclear export of the complex. Conversion from Ran-GTP to Ran-GDP mediates dissociation of the Rev/RRE/XPO1/RAN complex, so that Rev can return to the nucleus for a subsequent round of export. Beside KPNB1, also seems to interact with TNPO1/Transportin-1, RANBP5/IPO5 and IPO7/RANBP7 for nuclear import. The nucleoporin-like HRB/RIP is an essential cofactor that probably indirectly interacts with Rev to release HIV RNAs from the perinuclear region to the cytoplasm. The sequence is that of Protein Rev from Homo sapiens (Human).